We begin with the raw amino-acid sequence, 650 residues long: Acetyl-coenzyme A synthetase (650 aa).

Residues 189 to 192 (RGGK), Thr-307, and Asn-331 each bind CoA. ATP is bound by residues 383–385 (GEP), 407–412 (DTWWQT), Asp-496, and Arg-511. Position 519 (Ser-519) interacts with CoA. Arg-522 provides a ligand contact to ATP. Mg(2+)-binding residues include Val-533, His-535, and Val-538. Arg-580 is a binding site for CoA. At Lys-605 the chain carries N6-acetyllysine.

Belongs to the ATP-dependent AMP-binding enzyme family. Mg(2+) is required as a cofactor. Acetylated. Deacetylation by the SIR2-homolog deacetylase activates the enzyme.

It carries out the reaction acetate + ATP + CoA = acetyl-CoA + AMP + diphosphate. Functionally, catalyzes the conversion of acetate into acetyl-CoA (AcCoA), an essential intermediate at the junction of anabolic and catabolic pathways. AcsA undergoes a two-step reaction. In the first half reaction, AcsA combines acetate with ATP to form acetyl-adenylate (AcAMP) intermediate. In the second half reaction, it can then transfer the acetyl group from AcAMP to the sulfhydryl group of CoA, forming the product AcCoA. This chain is Acetyl-coenzyme A synthetase, found in Syntrophobacter fumaroxidans (strain DSM 10017 / MPOB).